The following is a 244-amino-acid chain: MSLTPLCEDLPQFLQNYLPNAGQTENTIVPFVTLTYAQSLDARVSRGPGVRTTISHPETKTMTHYLRHHHDGILVGSGTVLADNPGLNCKWGPDPAANSPRPIIIDTKQKWRFDGSKMQELFIKRQGKPPIVVVTSEPIIKEQHVDYAICPINDTTKLVDWKKLFEILKEEFNIRSVMVEGGANVINQLLLRSDIVNSLIITIGSTFLGSSGTEVSPPQTVNLKDMSWWKGITDVVLCARLADD.

NADP(+) is bound by residues Thr-79, Asp-83, Val-159, and 182–186 (GANVI).

Belongs to the HTP reductase family. As to quaternary structure, homodimer.

The catalysed reaction is 2,5-diamino-6-(1-D-ribitylamino)pyrimidin-4(3H)-one 5'-phosphate + NADP(+) = 2,5-diamino-6-(1-D-ribosylamino)pyrimidin-4(3H)-one 5'-phosphate + NADPH + H(+). It catalyses the reaction 2,5-diamino-6-(1-D-ribitylamino)pyrimidin-4(3H)-one 5'-phosphate + NAD(+) = 2,5-diamino-6-(1-D-ribosylamino)pyrimidin-4(3H)-one 5'-phosphate + NADH + H(+). It participates in cofactor biosynthesis; riboflavin biosynthesis. Catalyzes an early step in riboflavin biosynthesis, the NADPH-dependent reduction of the ribose side chain of 2,5-diamino-6-ribosylamino-4(3H)-pyrimidinone 5'-phosphate, yielding 2,5-diamino-6-ribitylamino-4(3H)-pyrimidinone 5'-phosphate. The chain is 2,5-diamino-6-ribosylamino-4(3H)-pyrimidinone 5'-phosphate reductase (RIB7) from Saccharomyces cerevisiae (strain ATCC 204508 / S288c) (Baker's yeast).